Consider the following 522-residue polypeptide: Lysine--tRNA ligase (522 aa).

A 'HIGH' region motif is present at residues proline 44–threonine 52. The short motif at lysine 290–serine 294 is the 'KMSKS' region element. Lysine 293 serves as a coordination point for ATP.

It belongs to the class-I aminoacyl-tRNA synthetase family.

It localises to the cytoplasm. The catalysed reaction is tRNA(Lys) + L-lysine + ATP = L-lysyl-tRNA(Lys) + AMP + diphosphate. This is Lysine--tRNA ligase from Rickettsia massiliae (strain Mtu5).